A 639-amino-acid polypeptide reads, in one-letter code: UvrABC system protein C (639 aa).

In terms of domain architecture, GIY-YIG spans 31 to 109 (EQAGVYRMYD…IKKYQPKYNI (79 aa)). A UVR domain is found at 218–253 (SAVIEQLVARMELASNELHFELAAKYRDQIVTLRKV).

It belongs to the UvrC family. In terms of assembly, interacts with UvrB in an incision complex.

The protein localises to the cytoplasm. In terms of biological role, the UvrABC repair system catalyzes the recognition and processing of DNA lesions. UvrC both incises the 5' and 3' sides of the lesion. The N-terminal half is responsible for the 3' incision and the C-terminal half is responsible for the 5' incision. The protein is UvrABC system protein C of Colwellia psychrerythraea (strain 34H / ATCC BAA-681) (Vibrio psychroerythus).